A 393-amino-acid polypeptide reads, in one-letter code: Sex hormone-binding globulin (393 aa).

The first 27 residues, 1–27, serve as a signal peptide directing secretion; it reads MEGRGPLATSPRRRWLLLLLLLPHSHQ. Laminin G-like domains lie at 35–208 and 215–381; these read VHLS…PRSC and GSFF…THSC. Cystine bridges form between cysteine 183–cysteine 208 and cysteine 353–cysteine 381. Asparagine 371 and asparagine 387 each carry an N-linked (GlcNAc...) asparagine glycan.

As to quaternary structure, homodimer.

It localises to the secreted. Functionally, functions as an androgen transport protein, but may also be involved in receptor mediated processes. Each dimer binds one molecule of steroid. Specific for 5-alpha-dihydrotestosterone, testosterone, and 17-beta-estradiol. Regulates the plasma metabolic clearance rate of steroid hormones by controlling their plasma concentration. This chain is Sex hormone-binding globulin (SHBG), found in Crocuta crocuta (Spotted hyena).